We begin with the raw amino-acid sequence, 430 residues long: Ribosomal protein uS12 methylthiotransferase RimO (430 aa).

Residues 4–119 (LKINFISLGC…IPVLFDIKPK (116 aa)) enclose the MTTase N-terminal domain. [4Fe-4S] cluster-binding residues include cysteine 13, cysteine 49, cysteine 82, cysteine 141, cysteine 145, and cysteine 148. The 232-residue stretch at 127–358 (STPKHTAYLK…SALQENITEQ (232 aa)) folds into the Radical SAM core domain. In terms of domain architecture, TRAM spans 361 to 430 (KSLIGKELDI…DKYDVVGEAE (70 aa)).

Belongs to the methylthiotransferase family. RimO subfamily. The cofactor is [4Fe-4S] cluster.

It is found in the cytoplasm. It carries out the reaction L-aspartate(89)-[ribosomal protein uS12]-hydrogen + (sulfur carrier)-SH + AH2 + 2 S-adenosyl-L-methionine = 3-methylsulfanyl-L-aspartate(89)-[ribosomal protein uS12]-hydrogen + (sulfur carrier)-H + 5'-deoxyadenosine + L-methionine + A + S-adenosyl-L-homocysteine + 2 H(+). Catalyzes the methylthiolation of an aspartic acid residue of ribosomal protein uS12. The polypeptide is Ribosomal protein uS12 methylthiotransferase RimO (Sulfurihydrogenibium sp. (strain YO3AOP1)).